A 95-amino-acid chain; its full sequence is Small ribosomal subunit protein uS19 (95 aa).

The segment at 76–95 (PTRTFRGHGGKKADKRGKLK) is disordered. A compositionally biased stretch (basic residues) spans 80-95 (FRGHGGKKADKRGKLK).

This sequence belongs to the universal ribosomal protein uS19 family.

In terms of biological role, protein S19 forms a complex with S13 that binds strongly to the 16S ribosomal RNA. This chain is Small ribosomal subunit protein uS19, found in Herpetosiphon aurantiacus (strain ATCC 23779 / DSM 785 / 114-95).